The sequence spans 294 residues: Probable 2-(5''-triphosphoribosyl)-3'-dephosphocoenzyme-A synthase (294 aa).

The protein belongs to the CitG/MdcB family.

The enzyme catalyses 3'-dephospho-CoA + ATP = 2'-(5''-triphospho-alpha-D-ribosyl)-3'-dephospho-CoA + adenine. This chain is Probable 2-(5''-triphosphoribosyl)-3'-dephosphocoenzyme-A synthase, found in Streptococcus pyogenes serotype M3 (strain ATCC BAA-595 / MGAS315).